A 729-amino-acid chain; its full sequence is ATP-dependent DNA helicase Hel308 (729 aa).

ATP contacts are provided by residues Gln28 and 46-53; that span reads IPTASGKT. The Helicase ATP-binding domain maps to 33-199; that stretch reads EKGLLEGRNL…WLEAELVVSE (167 aa). The DEAH box motif lies at 144–147; it reads DEVH. The region spanning 232–426 is the Helicase C-terminal domain; that stretch reads AVNLALDTLK…SKLGTENALR (195 aa). The tract at residues 706–729 is disordered; it reads SSGIIASEPPEKSPYSGQKTISDY. The segment covering 720 to 729 has biased composition (polar residues); that stretch reads YSGQKTISDY.

It belongs to the helicase family. Hel308 subfamily. As to quaternary structure, monomer.

It catalyses the reaction Couples ATP hydrolysis with the unwinding of duplex DNA by translocating in the 3'-5' direction.. The catalysed reaction is ATP + H2O = ADP + phosphate + H(+). DNA-dependent ATPase and 3'-5' DNA helicase that may be involved in repair of stalled replication forks. The protein is ATP-dependent DNA helicase Hel308 of Methanosarcina barkeri (strain Fusaro / DSM 804).